Consider the following 634-residue polypeptide: Chaperone protein HtpG (634 aa).

Residues 1-342 (MTVDTDKQTL…SADLSLNVSR (342 aa)) form an a; substrate-binding region. Residues 343–559 (EILQSGPVVD…QGDLGLQMRQ (217 aa)) form a b region. Residues 560-634 (LLEASGQAVP…LNKLLLELSA (75 aa)) form a c region.

It belongs to the heat shock protein 90 family. As to quaternary structure, homodimer.

Its subcellular location is the cytoplasm. Molecular chaperone. Has ATPase activity. This chain is Chaperone protein HtpG, found in Xanthomonas campestris pv. campestris (strain 8004).